A 630-amino-acid polypeptide reads, in one-letter code: Putative F-box/LRR-repeat protein At3g49150 (630 aa).

In terms of domain architecture, F-box spans lysine 15–alanine 63. LRR repeat units follow at residues cysteine 101–cysteine 129, arginine 152–lysine 178, leucine 180–asparagine 205, cysteine 228–aspartate 253, isoleucine 300–valine 325, aspartate 337–glycine 362, cysteine 406–tyrosine 436, aspartate 437–arginine 465, and aspartate 567–tryptophan 590.

The sequence is that of Putative F-box/LRR-repeat protein At3g49150 from Arabidopsis thaliana (Mouse-ear cress).